Reading from the N-terminus, the 179-residue chain is MARLKEIYRKEIAPKLKEELKLGNVMEVPRVTKITLNMGLGEAIGDKKVIENAVADLEKITGQKVVVTYARKSIAGFKVREGWPIGVKVTLRRDRMYEFLDRLLSISLPRVRDFRGLNAKSFDGRGNYSMGVKEQIIFPEIDYDKIDALRGLDITLTTTAKNDDEGRALLRAFKFPFRN.

It belongs to the universal ribosomal protein uL5 family. As to quaternary structure, part of the 50S ribosomal subunit; part of the 5S rRNA/L5/L18/L25 subcomplex. Contacts the 5S rRNA and the P site tRNA. Forms a bridge to the 30S subunit in the 70S ribosome.

This is one of the proteins that bind and probably mediate the attachment of the 5S RNA into the large ribosomal subunit, where it forms part of the central protuberance. In the 70S ribosome it contacts protein S13 of the 30S subunit (bridge B1b), connecting the 2 subunits; this bridge is implicated in subunit movement. Contacts the P site tRNA; the 5S rRNA and some of its associated proteins might help stabilize positioning of ribosome-bound tRNAs. This chain is Large ribosomal subunit protein uL5, found in Pseudomonas syringae pv. tomato (strain ATCC BAA-871 / DC3000).